The following is a 427-amino-acid chain: 3-phosphoshikimate 1-carboxyvinyltransferase (427 aa).

Positions 22, 23, and 27 each coordinate 3-phosphoshikimate. Lysine 22 lines the phosphoenolpyruvate pocket. The phosphoenolpyruvate site is built by glycine 96 and arginine 124. 7 residues coordinate 3-phosphoshikimate: serine 169, serine 170, glutamine 171, serine 197, aspartate 313, asparagine 336, and lysine 340. Glutamine 171 is a phosphoenolpyruvate binding site. Aspartate 313 functions as the Proton acceptor in the catalytic mechanism. Positions 344, 386, and 411 each coordinate phosphoenolpyruvate.

The protein belongs to the EPSP synthase family. As to quaternary structure, monomer.

The protein localises to the cytoplasm. It carries out the reaction 3-phosphoshikimate + phosphoenolpyruvate = 5-O-(1-carboxyvinyl)-3-phosphoshikimate + phosphate. The protein operates within metabolic intermediate biosynthesis; chorismate biosynthesis; chorismate from D-erythrose 4-phosphate and phosphoenolpyruvate: step 6/7. Catalyzes the transfer of the enolpyruvyl moiety of phosphoenolpyruvate (PEP) to the 5-hydroxyl of shikimate-3-phosphate (S3P) to produce enolpyruvyl shikimate-3-phosphate and inorganic phosphate. The polypeptide is 3-phosphoshikimate 1-carboxyvinyltransferase (Klebsiella pneumoniae subsp. pneumoniae (strain ATCC 700721 / MGH 78578)).